The following is a 436-amino-acid chain: Fibrinogen gamma chain (436 aa).

An N-terminal signal peptide occupies residues 1–25; it reads MSWSLQPPSFLLCCLLLLFSPTGLA. Asn77 carries an N-linked (GlcNAc...) asparagine glycan. The 247-residue stretch at 169-415 folds into the Fibrinogen C-terminal domain; the sequence is QIHDTTGKDC…ETTMKIIPFN (247 aa). Cys178 and Cys207 are joined by a disulfide. The Ca(2+) site is built by Asp343, Asp345, and Gly349. Cys351 and Cys364 are disulfide-bonded. Residue Gln423 forms an Isoglutamyl lysine isopeptide (Gln-Lys) (interchain with K-431) linkage. Ser430 bears the Phosphoserine mark. Lys431 is covalently cross-linked (Isoglutamyl lysine isopeptide (Lys-Gln) (interchain with Q-423)).

As to quaternary structure, heterohexamer; disulfide linked. Contains 2 sets of 3 non-identical chains (alpha, beta and gamma). The 2 heterotrimers are in head to head conformation with the N-termini in a small central domain. In terms of processing, conversion of fibrinogen to fibrin is triggered by thrombin, which cleaves fibrinopeptides A and B from alpha and beta chains, and thus exposes the N-terminal polymerization sites responsible for the formation of the soft clot. The soft clot is converted into the hard clot by factor XIIIA which catalyzes the epsilon-(gamma-glutamyl)lysine cross-linking between gamma chains (stronger) and between alpha chains (weaker) of different monomers.

Its subcellular location is the secreted. In terms of biological role, together with fibrinogen alpha (FGA) and fibrinogen beta (FGB), polymerizes to form an insoluble fibrin matrix. Fibrin has a major function in hemostasis as one of the primary components of blood clots. In addition, functions during the early stages of wound repair to stabilize the lesion and guide cell migration during re-epithelialization. Was originally thought to be essential for platelet aggregation, based on in vitro studies using anticoagulated blood. However, subsequent studies have shown that it is not absolutely required for thrombus formation in vivo. Enhances expression of SELP in activated platelets via an ITGB3-dependent pathway. Maternal fibrinogen is essential for successful pregnancy. Fibrin deposition is also associated with infection, where it protects against IFNG-mediated hemorrhage. May also facilitate the immune response via both innate and T-cell mediated pathways. The protein is Fibrinogen gamma chain (Fgg) of Mus musculus (Mouse).